The primary structure comprises 383 residues: Acetylornithine deacetylase (383 aa).

His80 lines the Zn(2+) pocket. The active site involves Asp82. Asp112 contributes to the Zn(2+) binding site. Residue Glu144 is part of the active site. The Zn(2+) site is built by Glu145, Glu169, and His355.

Belongs to the peptidase M20A family. ArgE subfamily. In terms of assembly, homodimer. Zn(2+) serves as cofactor. Co(2+) is required as a cofactor. The cofactor is glutathione.

The protein localises to the cytoplasm. The enzyme catalyses N(2)-acetyl-L-ornithine + H2O = L-ornithine + acetate. The protein operates within amino-acid biosynthesis; L-arginine biosynthesis; L-ornithine from N(2)-acetyl-L-ornithine (linear): step 1/1. Catalyzes the hydrolysis of the amide bond of N(2)-acetylated L-amino acids. Cleaves the acetyl group from N-acetyl-L-ornithine to form L-ornithine, an intermediate in L-arginine biosynthesis pathway, and a branchpoint in the synthesis of polyamines. This is Acetylornithine deacetylase from Salmonella typhimurium (strain LT2 / SGSC1412 / ATCC 700720).